The primary structure comprises 330 residues: D-lactate dehydrogenase (330 aa).

NAD(+) contacts are provided by residues 156–157, aspartate 176, 206–207, 233–235, and aspartate 259; these read RI, VP, and AAR. Arginine 235 is an active-site residue. Glutamate 264 is a catalytic residue. The active-site Proton donor is the histidine 296.

This sequence belongs to the D-isomer specific 2-hydroxyacid dehydrogenase family.

It catalyses the reaction (R)-lactate + NAD(+) = pyruvate + NADH + H(+). This chain is D-lactate dehydrogenase (ldhD), found in Staphylococcus aureus.